The following is a 352-amino-acid chain: Rhodopsin, deep-sea form (352 aa).

Topologically, residues methionine 1–alanine 36 are extracellular. Asparagine 2 and asparagine 15 each carry an N-linked (GlcNAc...) asparagine glycan. A helical membrane pass occupies residues tyrosine 37–valine 61. Residues threonine 62–asparagine 73 are Cytoplasmic-facing. The chain crosses the membrane as a helical span at residues tyrosine 74–serine 98. The Extracellular portion of the chain corresponds to methionine 99–glutamate 113. Residues cysteine 110 and cysteine 187 are joined by a disulfide bond. A helical membrane pass occupies residues glycine 114 to isoleucine 133. Over glutamate 134–histidine 152 the chain is Cytoplasmic. The chain crosses the membrane as a helical span at residues alanine 153 to serine 176. Topologically, residues arginine 177–serine 202 are extracellular. Asparagine 200 is a glycosylation site (N-linked (GlcNAc...) asparagine). A helical transmembrane segment spans residues phenylalanine 203–valine 230. Topologically, residues lysine 231–arginine 252 are cytoplasmic. A helical transmembrane segment spans residues methionine 253–phenylalanine 276. Residues threonine 277–glycine 284 lie on the Extracellular side of the membrane. Residues proline 285–leucine 309 form a helical membrane-spanning segment. Position 296 is an N6-(retinylidene)lysine (lysine 296). Residues asparagine 310 to alanine 352 lie on the Cytoplasmic side of the membrane. Residue cysteine 323 is the site of S-palmitoyl cysteine attachment. The segment at glycine 333–alanine 352 is disordered. Positions alanine 334–alanine 352 are enriched in low complexity.

This sequence belongs to the G-protein coupled receptor 1 family. Opsin subfamily. Post-translationally, phosphorylated on some or all of the serine and threonine residues present in the C-terminal region. In terms of tissue distribution, rod shaped photoreceptor cells which mediates vision in dim light.

It is found in the membrane. Its function is as follows. Visual pigments such as rhodopsin and porphyropsin are light-absorbing molecules that mediate vision. Rhodopsin consists of an apoprotein, opsin, covalently linked to 11-cis-retinal. This receptor is coupled to the activation of phospholipase C. Porphyropsin consists of opsin covalently linked to 11-cis 3,4-didehydroretinal. This chain is Rhodopsin, deep-sea form, found in Anguilla anguilla (European freshwater eel).